A 155-amino-acid chain; its full sequence is MLKQVEIFTDGSCLGNPGPGGYGAILRYRGREKTFSAGYTRTTNNRMELMAAIVALEALKEHCEVILSTDSQYVRQGITQWIHSWKKRGWKTADKKPVKNVDLWQRLDAALGQHQIKWEWVKGHAGHPENERCDELARAAAMNPTLEDTGYQVEV.

Residues methionine 1–methionine 142 enclose the RNase H type-1 domain. Residues aspartate 10, glutamate 48, aspartate 70, and aspartate 134 each contribute to the Mg(2+) site.

The protein belongs to the RNase H family. Monomer. The cofactor is Mg(2+).

Its subcellular location is the cytoplasm. It catalyses the reaction Endonucleolytic cleavage to 5'-phosphomonoester.. Endonuclease that specifically degrades the RNA of RNA-DNA hybrids. The chain is Ribonuclease H from Escherichia coli (strain 55989 / EAEC).